The following is an 80-amino-acid chain: Defensin-like protein 204 (80 aa).

The first 29 residues, Met-1–Ala-29, serve as a signal peptide directing secretion. Cystine bridges form between Cys-43-Cys-64, Cys-48-Cys-73, and Cys-52-Cys-75.

Belongs to the DEFL family.

The protein localises to the secreted. This Arabidopsis thaliana (Mouse-ear cress) protein is Defensin-like protein 204.